The chain runs to 439 residues: GTPase Der (439 aa).

2 consecutive EngA-type G domains span residues 2-166 and 176-351; these read SVVA…PAPA and TRLA…IEFN. GTP is bound by residues 8 to 15, 55 to 59, 118 to 121, 182 to 189, 229 to 233, and 294 to 297; these read GRPNVGKS, DTGGF, NKVD, DTAGI, and NKWD. One can recognise a KH-like domain in the interval 352-436; the sequence is RQVPTGVLNR…PIRLKFKDRN (85 aa).

This sequence belongs to the TRAFAC class TrmE-Era-EngA-EngB-Septin-like GTPase superfamily. EngA (Der) GTPase family. Associates with the 50S ribosomal subunit.

In terms of biological role, GTPase that plays an essential role in the late steps of ribosome biogenesis. This is GTPase Der from Syntrophotalea carbinolica (strain DSM 2380 / NBRC 103641 / GraBd1) (Pelobacter carbinolicus).